Reading from the N-terminus, the 195-residue chain is Imidazoleglycerol-phosphate dehydratase (195 aa).

The protein belongs to the imidazoleglycerol-phosphate dehydratase family.

The protein resides in the cytoplasm. It catalyses the reaction D-erythro-1-(imidazol-4-yl)glycerol 3-phosphate = 3-(imidazol-4-yl)-2-oxopropyl phosphate + H2O. Its pathway is amino-acid biosynthesis; L-histidine biosynthesis; L-histidine from 5-phospho-alpha-D-ribose 1-diphosphate: step 6/9. The chain is Imidazoleglycerol-phosphate dehydratase from Roseobacter denitrificans (strain ATCC 33942 / OCh 114) (Erythrobacter sp. (strain OCh 114)).